The chain runs to 64 residues: Protein translocase subunit SecE (64 aa).

The chain crosses the membrane as a helical span at residues 35-55 (LVVLGTVAFITVFFAVVDYGI).

This sequence belongs to the SecE/SEC61-gamma family. As to quaternary structure, component of the Sec protein translocase complex. Heterotrimer consisting of SecY, SecE and SecG subunits. The heterotrimers can form oligomers, although 1 heterotrimer is thought to be able to translocate proteins. Interacts with the ribosome. Interacts with SecDF, and other proteins may be involved. Interacts with SecA.

The protein localises to the cell membrane. In terms of biological role, essential subunit of the Sec protein translocation channel SecYEG. Clamps together the 2 halves of SecY. May contact the channel plug during translocation. This is Protein translocase subunit SecE from Halalkalibacterium halodurans (strain ATCC BAA-125 / DSM 18197 / FERM 7344 / JCM 9153 / C-125) (Bacillus halodurans).